The chain runs to 324 residues: COP9 signalosome complex subunit 6 (324 aa).

The region spanning V38–I171 is the MPN domain.

This sequence belongs to the peptidase M67A family. CSN6 subfamily. In terms of assembly, component of the CSN complex, composed of COPS1/GPS1, COPS2, COPS3, COPS4, COPS5, COPS6, COPS7 (COPS7A or COPS7B), COPS8 and COPS9. In the complex, it probably interacts directly with COPS2, COPS4, COPS5, COPS7 (COPS7A or COPS7B) and COPS9. Interacts with the translation initiation factor EIF3S6. Interacts weakly with RBX1. Directly interacts with COP1 and 14-3-3 protein sigma/SFN. Interacts with ERCC6.

It is found in the cytoplasm. The protein resides in the nucleus. Component of the COP9 signalosome complex (CSN), a complex involved in various cellular and developmental processes. The CSN complex is an essential regulator of the ubiquitin (Ubl) conjugation pathway by mediating the deneddylation of the cullin subunits of SCF-type E3 ligase complexes, leading to decrease the Ubl ligase activity of SCF-type complexes such as SCF, CSA or DDB2. The complex is also involved in phosphorylation of p53/TP53, c-jun/JUN, IkappaBalpha/NFKBIA, ITPK1 and IRF8, possibly via its association with CK2 and PKD kinases. CSN-dependent phosphorylation of TP53 and JUN promotes and protects degradation by the Ubl system, respectively. Has some glucocorticoid receptor-responsive activity. Stabilizes COP1 through reducing COP1 auto-ubiquitination and decelerating COP1 turnover rate, hence regulates the ubiquitination of COP1 targets, including SFN. In Mus musculus (Mouse), this protein is COP9 signalosome complex subunit 6 (Cops6).